The sequence spans 78 residues: Omega-conotoxin PnVIA (78 aa).

The signal sequence occupies residues 1 to 22 (MKLTCMMIIAVLFLTAWTFVMA). Positions 23-45 (DDPRDEPEARDEMNPAASKLNER) are excised as a propeptide. 3 disulfide bridges follow: cysteine 47/cysteine 65, cysteine 54/cysteine 69, and cysteine 64/cysteine 73. At glutamine 76 the chain carries Glutamine amide.

Expressed by the venom duct.

Its subcellular location is the secreted. Omega-conotoxins act at presynaptic membranes, they bind and block voltage-gated calcium channels (Cav). Acts on high voltage-activated (HVA) calcium currents in molluscan neurons. This is Omega-conotoxin PnVIA from Conus pennaceus (Feathered cone).